The following is a 318-amino-acid chain: tRNA-cytidine(32) 2-sulfurtransferase (318 aa).

Residues 1 to 29 are disordered; it reads MNHVSSTKPDTAPSKHLTSSHIDATDQNN. The span at 16–27 shows a compositional bias: polar residues; that stretch reads HLTSSHIDATDQ. The PP-loop motif signature appears at 64–69; that stretch reads SGGKDS. Cys139, Cys142, and Cys230 together coordinate [4Fe-4S] cluster.

Belongs to the TtcA family. In terms of assembly, homodimer. Requires Mg(2+) as cofactor. [4Fe-4S] cluster serves as cofactor.

The protein resides in the cytoplasm. It carries out the reaction cytidine(32) in tRNA + S-sulfanyl-L-cysteinyl-[cysteine desulfurase] + AH2 + ATP = 2-thiocytidine(32) in tRNA + L-cysteinyl-[cysteine desulfurase] + A + AMP + diphosphate + H(+). Its pathway is tRNA modification. Functionally, catalyzes the ATP-dependent 2-thiolation of cytidine in position 32 of tRNA, to form 2-thiocytidine (s(2)C32). The sulfur atoms are provided by the cysteine/cysteine desulfurase (IscS) system. The polypeptide is tRNA-cytidine(32) 2-sulfurtransferase (Pseudoalteromonas atlantica (strain T6c / ATCC BAA-1087)).